The following is a 337-amino-acid chain: Glyceraldehyde-3-phosphate dehydrogenase, cytosolic (337 aa).

Residues 13-14, aspartate 35, and arginine 82 contribute to the NAD(+) site; that span reads RI. D-glyceraldehyde 3-phosphate contacts are provided by residues 153–155, threonine 184, 213–214, and arginine 236; these read SCT and TG. Cysteine 154 acts as the Nucleophile in catalysis. Asparagine 318 serves as a coordination point for NAD(+).

Belongs to the glyceraldehyde-3-phosphate dehydrogenase family. As to quaternary structure, homotetramer.

The protein resides in the cytoplasm. It catalyses the reaction D-glyceraldehyde 3-phosphate + phosphate + NAD(+) = (2R)-3-phospho-glyceroyl phosphate + NADH + H(+). The protein operates within carbohydrate degradation; glycolysis; pyruvate from D-glyceraldehyde 3-phosphate: step 1/5. Key enzyme in glycolysis that catalyzes the first step of the pathway by converting D-glyceraldehyde 3-phosphate (G3P) into 3-phospho-D-glyceroyl phosphate. Essential for the maintenance of cellular ATP levels and carbohydrate metabolism. This chain is Glyceraldehyde-3-phosphate dehydrogenase, cytosolic (GAPC), found in Antirrhinum majus (Garden snapdragon).